The primary structure comprises 600 residues: Probable translation initiation factor IF-2 (600 aa).

The tr-type G domain occupies 13 to 228 (LRTPIVAVLG…VLMGLAQRYM (216 aa)). Residues 22–29 (GHVDHGKT) form a G1 region. 22 to 29 (GHVDHGKT) is a binding site for GTP. Residues 47-51 (AITQH) form a G2 region. The G3 stretch occupies residues 84 to 87 (DTPG). Residues 84–88 (DTPGH) and 138–141 (NKID) each bind GTP. The tract at residues 138 to 141 (NKID) is G4. Residues 140–162 (IDTTPGWNPNPDAPVQGTYDDQS) are disordered. A G5 region spans residues 206–208 (SAE).

The protein belongs to the TRAFAC class translation factor GTPase superfamily. Classic translation factor GTPase family. IF-2 subfamily.

Its function is as follows. Function in general translation initiation by promoting the binding of the formylmethionine-tRNA to ribosomes. Seems to function along with eIF-2. The polypeptide is Probable translation initiation factor IF-2 (Halobacterium salinarum (strain ATCC 700922 / JCM 11081 / NRC-1) (Halobacterium halobium)).